The following is a 259-amino-acid chain: Probable 6-phosphogluconolactonase 2 (259 aa).

Belongs to the glucosamine/galactosamine-6-phosphate isomerase family. 6-phosphogluconolactonase subfamily.

It localises to the cytoplasm. It is found in the cytosol. The enzyme catalyses 6-phospho-D-glucono-1,5-lactone + H2O = 6-phospho-D-gluconate + H(+). The protein operates within carbohydrate degradation; pentose phosphate pathway; D-ribulose 5-phosphate from D-glucose 6-phosphate (oxidative stage): step 2/3. Its function is as follows. Catalyzes the hydrolysis of 6-phosphogluconolactone to 6-phosphogluconate. The chain is Probable 6-phosphogluconolactonase 2 from Arabidopsis thaliana (Mouse-ear cress).